A 214-amino-acid polypeptide reads, in one-letter code: Ras-related protein RABA5c (214 aa).

19-26 is a GTP binding site; it reads GDSAVGKS. The Effector region motif lies at 41 to 49; sequence SKATIGVEF. Residues 67–71, 125–128, and 155–156 contribute to the GTP site; these read DTAGQ, NKCD, and SA. S-geranylgeranyl cysteine attachment occurs at residues C211 and C212.

It belongs to the small GTPase superfamily. Rab family. In terms of assembly, interacts (via C-terminus) with GDI1. Interacts with PUX8/SAY1. In terms of tissue distribution, expressed in roots and actively dividing cells.

The protein resides in the golgi apparatus membrane. It is found in the golgi apparatus. The protein localises to the trans-Golgi network membrane. Its subcellular location is the cell membrane. Its function is as follows. Intracellular vesicle trafficking and protein transport. Binds GTP and GDP and possesses intrinsic GTPase activity. The protein is Ras-related protein RABA5c (RABA5C) of Arabidopsis thaliana (Mouse-ear cress).